We begin with the raw amino-acid sequence, 287 residues long: Acetyl-coenzyme A carboxylase carboxyl transferase subunit beta (287 aa).

The region spanning 28–287 (LWKKCPKCEN…ILSLLTNKVA (260 aa)) is the CoA carboxyltransferase N-terminal domain. Zn(2+) is bound by residues C32, C35, C51, and C54. Residues 32-54 (CPKCENVLYRPELEKNLDVCPKC) form a C4-type zinc finger.

The protein belongs to the AccD/PCCB family. As to quaternary structure, acetyl-CoA carboxylase is a heterohexamer composed of biotin carboxyl carrier protein (AccB), biotin carboxylase (AccC) and two subunits each of ACCase subunit alpha (AccA) and ACCase subunit beta (AccD). It depends on Zn(2+) as a cofactor.

The protein resides in the cytoplasm. It catalyses the reaction N(6)-carboxybiotinyl-L-lysyl-[protein] + acetyl-CoA = N(6)-biotinyl-L-lysyl-[protein] + malonyl-CoA. It functions in the pathway lipid metabolism; malonyl-CoA biosynthesis; malonyl-CoA from acetyl-CoA: step 1/1. In terms of biological role, component of the acetyl coenzyme A carboxylase (ACC) complex. Biotin carboxylase (BC) catalyzes the carboxylation of biotin on its carrier protein (BCCP) and then the CO(2) group is transferred by the transcarboxylase to acetyl-CoA to form malonyl-CoA. This Marinomonas sp. (strain MWYL1) protein is Acetyl-coenzyme A carboxylase carboxyl transferase subunit beta.